A 490-amino-acid chain; its full sequence is Glutamate--tRNA ligase (490 aa).

The short motif at 13–23 is the 'HIGH' region element; the sequence is PSPTGTPHVGL. Residues 257 to 261 carry the 'KMSKS' region motif; the sequence is KLSKR. Lysine 260 is a binding site for ATP.

Belongs to the class-I aminoacyl-tRNA synthetase family. Glutamate--tRNA ligase type 1 subfamily. In terms of assembly, monomer.

The protein localises to the cytoplasm. It catalyses the reaction tRNA(Glu) + L-glutamate + ATP = L-glutamyl-tRNA(Glu) + AMP + diphosphate. In terms of biological role, catalyzes the attachment of glutamate to tRNA(Glu) in a two-step reaction: glutamate is first activated by ATP to form Glu-AMP and then transferred to the acceptor end of tRNA(Glu). This chain is Glutamate--tRNA ligase, found in Mycobacterium bovis (strain BCG / Pasteur 1173P2).